Reading from the N-terminus, the 234-residue chain is MIELWPAIDLIGSTSVRLTEGKYDSEEKMSRSAEESIAYYSQFECVNRIHIVDLIGAKAQYAREFDYIKSLRRLTTKDIEVGGGIRTKSQIMDYFAAGINYCIVGTKGIQDTDWLKEMAHTFPGRIYLSVDAYGEDIKVNGWEEDTELNLFSFVRQLSDIPLGGIIYTDIAKDGKMSGPNFELTGQLVKATTIPVIASGGIRHQQDIQRLASLNVHAAIIGKAAHQASFWEGLE.

The active-site Proton acceptor is Asp9. The Proton donor role is filled by Asp131.

Belongs to the HisA/HisF family.

It is found in the cytoplasm. It carries out the reaction 1-(5-phospho-beta-D-ribosyl)-5-[(5-phospho-beta-D-ribosylamino)methylideneamino]imidazole-4-carboxamide = 5-[(5-phospho-1-deoxy-D-ribulos-1-ylimino)methylamino]-1-(5-phospho-beta-D-ribosyl)imidazole-4-carboxamide. Its pathway is amino-acid biosynthesis; L-histidine biosynthesis; L-histidine from 5-phospho-alpha-D-ribose 1-diphosphate: step 4/9. This chain is 1-(5-phosphoribosyl)-5-[(5-phosphoribosylamino)methylideneamino] imidazole-4-carboxamide isomerase, found in Staphylococcus aureus (strain JH1).